Consider the following 1441-residue polypeptide: Receptor-type tyrosine-protein phosphatase T (1441 aa).

The N-terminal stretch at M1 to A25 is a signal peptide. The Extracellular segment spans residues Q26 to M747. One can recognise an MAM domain in the interval G30–K191. N78, N98, N137, and N208 each carry an N-linked (GlcNAc...) asparagine glycan. The Ig-like C2-type domain maps to P193 to I284. A disulfide bond links C213 and C267. 4 consecutive Fibronectin type-III domains span residues P291–A384, G389–D483, V484–S590, and M591–G726. N-linked (GlcNAc...) asparagine glycans are attached at residues N421, N510, N547, N601, N654, and N684. Residues A748–I768 traverse the membrane as a helical segment. Topologically, residues K769–F1441 are cytoplasmic. Positions T790–S839 are disordered. Positions T809–N828 are enriched in polar residues. 2 consecutive Tyrosine-protein phosphatase domains span residues F889–A1143 and I1175–Y1437. Residues D1052, C1084–R1090, and Q1128 contribute to the substrate site. The active-site Phosphocysteine intermediate is the C1084. S1208 carries the phosphoserine modification. The Phosphocysteine intermediate role is filled by C1378.

It belongs to the protein-tyrosine phosphatase family. Receptor class 2B subfamily. Expressed in colon, lung, heart and testis, as well as in fetal and adult brain. Not detected in muscle and peripheral blood leukocytes.

It localises to the membrane. It catalyses the reaction O-phospho-L-tyrosyl-[protein] + H2O = L-tyrosyl-[protein] + phosphate. Its function is as follows. May be involved in both signal transduction and cellular adhesion in the CNS. This is Receptor-type tyrosine-protein phosphatase T (PTPRT) from Homo sapiens (Human).